Consider the following 227-residue polypeptide: General transcription factor 3C polypeptide 6 (227 aa).

Residues 157–227 (DEAAGPASDK…DGNVSQNNQS (71 aa)) are disordered. Residues 186 to 195 (EQEKVEHSEV) show a composition bias toward basic and acidic residues. The span at 203–227 (ETPSEMESSVFMGTQDGNVSQNNQS) shows a compositional bias: polar residues.

Belongs to the TFIIIC subunit 6 family. In terms of assembly, part of the TFIIIC subcomplex TFIIIC2, consisting of six subunits, GTF3C1, GTF3C2, GTF3C3, GTF3C4, GTF3C5 and GTF3C6. Interacts with GTF3C4 and GTF3C5.

Its subcellular location is the nucleus. Functionally, involved in RNA polymerase III-mediated transcription. Integral, tightly associated component of the DNA-binding TFIIIC2 subcomplex that directly binds tRNA and virus-associated RNA promoters. This chain is General transcription factor 3C polypeptide 6, found in Mus musculus (Mouse).